The sequence spans 293 residues: tRNA pseudouridine synthase B (293 aa).

Asp39 serves as the catalytic Nucleophile.

This sequence belongs to the pseudouridine synthase TruB family. Type 1 subfamily.

The enzyme catalyses uridine(55) in tRNA = pseudouridine(55) in tRNA. Functionally, responsible for synthesis of pseudouridine from uracil-55 in the psi GC loop of transfer RNAs. The protein is tRNA pseudouridine synthase B of Streptococcus thermophilus (strain CNRZ 1066).